The chain runs to 285 residues: MSTILKWAGNKTAIMSELKKHLPAGPRLVEPFAGSCAVMMATDYPSYLVADINPDLINLYKKIAADCEAFISRARVLFEIANREVAYYNIRQEFNYSTEITDFMKAVYFLYLNRHGYRGLCRYNKSGHFNIPYGNYKNPYFPEKEIRKFAEKAQRATFICASFDETLAMLQVGDVVYCDPPYDGTFSGYHTDGFTEDDQYHLASVLEYRSSEGHPVIVSNSDTSLIRSLYRNFTHHYIKAKRSIGVSAGESKSATEIIAVSGARCWVGFDPSRGVDSSAVYEVRV.

Positions 7, 11, 51, and 179 each coordinate S-adenosyl-L-methionine.

This sequence belongs to the N(4)/N(6)-methyltransferase family.

The enzyme catalyses a 2'-deoxyadenosine in DNA + S-adenosyl-L-methionine = an N(6)-methyl-2'-deoxyadenosine in DNA + S-adenosyl-L-homocysteine + H(+). Its function is as follows. An alpha subtype methylase that recognizes the double-stranded sequence 5'-GATC-3' and methylates A-2 on both strands. May play a regulatory role in the functions of the retron. The polypeptide is Retron Ec67 DNA adenine methylase (Escherichia coli).